We begin with the raw amino-acid sequence, 136 residues long: Acidic phospholipase A2 CC-PLA2-2 (136 aa).

The signal sequence occupies residues 1–16 (MRTLWIVAVWLMGVEG). Intrachain disulfides connect C42-C129, C44-C60, C59-C109, C65-C136, C66-C102, C73-C95, and C90-C100. Y43, G45, and G47 together coordinate Ca(2+). The active site involves H63. D64 serves as a coordination point for Ca(2+). D103 is an active-site residue.

It belongs to the phospholipase A2 family. Group II subfamily. D49 sub-subfamily. It depends on Ca(2+) as a cofactor. Post-translationally, glycosylated (2.5%). As to expression, expressed by the venom gland.

The protein localises to the secreted. The catalysed reaction is a 1,2-diacyl-sn-glycero-3-phosphocholine + H2O = a 1-acyl-sn-glycero-3-phosphocholine + a fatty acid + H(+). Functionally, snake venom phospholipase A2 that inhibits blood coagulation and platelet aggregation induced by ADP and arachidonic acid. Inhibits tumor cell adhesion and migration in a dose-dependent manner. Abolishes the attachment of human brain microvascular endothelial cells (HBMEC) to fibrinogen (IC(50)=0.2 uM) and dramatically reduces its adhesion to fibronectin (IC(50)=0.3 uM), whereas no effect is observed on type I collagen, vitronectin or laminin 1. Also blocks the cell migration toward fibronectin and fibrinogen. These effects are not dependent of the catalytic activity, but are mediated by alpha-5/beta-1 (ITGA5/ITGB1) and alpha-v-containing (ITGAV) integrins. Also shows anti-angiogenic activity in chicken chorioallantoix membrane assay. Has a relatively high enzymatic activity. PLA2 catalyzes the calcium-dependent hydrolysis of the 2-acyl groups in 3-sn-phosphoglycerides. The sequence is that of Acidic phospholipase A2 CC-PLA2-2 from Cerastes cerastes (Horned desert viper).